Here is a 474-residue protein sequence, read N- to C-terminus: tRNA-2-methylthio-N(6)-dimethylallyladenosine synthase (474 aa).

Positions 3-120 constitute an MTTase N-terminal domain; it reads KKLHIKTWGC…LPEMIDQIRD (118 aa). [4Fe-4S] cluster contacts are provided by C12, C49, C83, C157, C161, and C164. The Radical SAM core domain occupies 143 to 375; sequence RADGPSAFVS…QDRITQQAMR (233 aa). The 64-residue stretch at 378–441 folds into the TRAM domain; the sequence is RQMLGTVQRI…TNSLRGTFVR (64 aa).

Belongs to the methylthiotransferase family. MiaB subfamily. Monomer. The cofactor is [4Fe-4S] cluster.

Its subcellular location is the cytoplasm. The catalysed reaction is N(6)-dimethylallyladenosine(37) in tRNA + (sulfur carrier)-SH + AH2 + 2 S-adenosyl-L-methionine = 2-methylsulfanyl-N(6)-dimethylallyladenosine(37) in tRNA + (sulfur carrier)-H + 5'-deoxyadenosine + L-methionine + A + S-adenosyl-L-homocysteine + 2 H(+). Its function is as follows. Catalyzes the methylthiolation of N6-(dimethylallyl)adenosine (i(6)A), leading to the formation of 2-methylthio-N6-(dimethylallyl)adenosine (ms(2)i(6)A) at position 37 in tRNAs that read codons beginning with uridine. The sequence is that of tRNA-2-methylthio-N(6)-dimethylallyladenosine synthase from Shewanella sediminis (strain HAW-EB3).